A 47-amino-acid chain; its full sequence is Fasciclin-like arabinogalactan protein (47 aa).

Residues 1–47 (APTPATLNGLTIFAPNDEAFKATGVPDLSKLSNAPMVSLLQYHAAAR) form the FAS1 domain.

It belongs to the fasciclin-like AGP family.

In terms of biological role, may be a cell surface adhesion protein. The sequence is that of Fasciclin-like arabinogalactan protein from Jatropha curcas (Barbados nut).